The primary structure comprises 321 residues: GDP-L-fucose synthase (321 aa).

14–20 (GGSGLVG) contacts NADP(+). Tyr143 (proton donor/acceptor) is an active-site residue. Residues Lys147, 170 to 173 (PTNV), and His186 contribute to the NADP(+) site. Substrate-binding residues include Lys194, Trp208, Arg215, and Asp277.

It belongs to the NAD(P)-dependent epimerase/dehydratase family. Fucose synthase subfamily. In terms of assembly, homodimer.

It catalyses the reaction GDP-beta-L-fucose + NADP(+) = GDP-4-dehydro-alpha-D-rhamnose + NADPH + H(+). Its pathway is nucleotide-sugar biosynthesis; GDP-L-fucose biosynthesis via de novo pathway; GDP-L-fucose from GDP-alpha-D-mannose: step 2/2. In terms of biological role, catalyzes the two-step NADP-dependent conversion of GDP-4-dehydro-6-deoxy-D-mannose to GDP-fucose, involving an epimerase and a reductase reaction. The protein is GDP-L-fucose synthase (GFUS) of Pongo abelii (Sumatran orangutan).